A 271-amino-acid polypeptide reads, in one-letter code: Dermonecrotic toxin LarSicTox-alphaIB1c (271 aa).

H3 is a catalytic residue. The Mg(2+) site is built by E23 and D25. H39 (nucleophile) is an active-site residue. Cystine bridges form between C43-C49 and C45-C188. Residue D83 coordinates Mg(2+). N-linked (GlcNAc...) asparagine glycosylation is present at N248.

It belongs to the arthropod phospholipase D family. Class II subfamily. Mg(2+) serves as cofactor. In terms of tissue distribution, expressed by the venom gland.

It localises to the secreted. The catalysed reaction is an N-(acyl)-sphingosylphosphocholine = an N-(acyl)-sphingosyl-1,3-cyclic phosphate + choline. The enzyme catalyses an N-(acyl)-sphingosylphosphoethanolamine = an N-(acyl)-sphingosyl-1,3-cyclic phosphate + ethanolamine. It catalyses the reaction a 1-acyl-sn-glycero-3-phosphocholine = a 1-acyl-sn-glycero-2,3-cyclic phosphate + choline. It carries out the reaction a 1-acyl-sn-glycero-3-phosphoethanolamine = a 1-acyl-sn-glycero-2,3-cyclic phosphate + ethanolamine. Functionally, dermonecrotic toxins cleave the phosphodiester linkage between the phosphate and headgroup of certain phospholipids (sphingolipid and lysolipid substrates), forming an alcohol (often choline) and a cyclic phosphate. This toxin acts on sphingomyelin (SM). It may also act on ceramide phosphoethanolamine (CPE), lysophosphatidylcholine (LPC) and lysophosphatidylethanolamine (LPE), but not on lysophosphatidylserine (LPS), and lysophosphatidylglycerol (LPG). It acts by transphosphatidylation, releasing exclusively cyclic phosphate products as second products. Induces dermonecrosis, hemolysis, increased vascular permeability, edema, inflammatory response, and platelet aggregation. The polypeptide is Dermonecrotic toxin LarSicTox-alphaIB1c (Loxosceles arizonica (Arizona brown spider)).